The sequence spans 60 residues: Large ribosomal subunit protein uL30 (60 aa).

Belongs to the universal ribosomal protein uL30 family. As to quaternary structure, part of the 50S ribosomal subunit.

In Saccharopolyspora erythraea (strain ATCC 11635 / DSM 40517 / JCM 4748 / NBRC 13426 / NCIMB 8594 / NRRL 2338), this protein is Large ribosomal subunit protein uL30.